The chain runs to 248 residues: MSEQQVQELEKKWYALQVEPGKENEAKENLLKVLELEGLKDLVDEVIVPAEEKVVIRAQGKEKYRLSLKGNARDISVLGKKGVTTFRIENGEVKVVESVEGDTCVNAPPISKPGQKITCKENKTEAKIVLDNKIFPGYILIKAHMNDKLLMAIEKTPHVFRPVMVGGKPVPLKEEEVQNILNQIKRGVKPSKVEFEKGDQVRVIEGPFMNFTGTVEEVHPEKRKLTVMISIFGRMTPVELDFDQVEKI.

A KOW domain is found at 197-227 (KGDQVRVIEGPFMNFTGTVEEVHPEKRKLTV).

This sequence belongs to the NusG family. Monomer. Homodimer.

Functionally, participates in transcription elongation, termination and antitermination. This Aquifex aeolicus (strain VF5) protein is Transcription termination/antitermination protein NusG.